The primary structure comprises 147 residues: Ubiquitin-conjugating enzyme E2 D1 (147 aa).

One can recognise a UBC core domain in the interval 1 to 147 (MALKRIQKEL…AREWTQKYAM (147 aa)). Cys-85 (glycyl thioester intermediate) is an active-site residue.

It belongs to the ubiquitin-conjugating enzyme family. As to quaternary structure, component of a E3 ubiquitin ligase complex containing UBE2D1, SIAH1, CACYBP/SIP, SKP1, APC and TBL1X. Interacts with RNF11. Post-translationally, autoubiquitinated.

It localises to the cytoplasm. The catalysed reaction is S-ubiquitinyl-[E1 ubiquitin-activating enzyme]-L-cysteine + [E2 ubiquitin-conjugating enzyme]-L-cysteine = [E1 ubiquitin-activating enzyme]-L-cysteine + S-ubiquitinyl-[E2 ubiquitin-conjugating enzyme]-L-cysteine.. It carries out the reaction S-ubiquitinyl-[E1 ubiquitin-activating enzyme]-L-cysteine + [acceptor protein]-L-lysine = [E1 ubiquitin-activating enzyme]-L-cysteine + N(6)-monoubiquitinyl-[acceptor protein]-L-lysine.. The protein operates within protein modification; protein ubiquitination. Accepts ubiquitin from the E1 complex and catalyzes its covalent attachment to other proteins. In vitro catalyzes 'Lys-48'-linked polyubiquitination. Mediates the selective degradation of short-lived and abnormal proteins. Functions in the E6/E6-AP-induced ubiquitination of p53/TP53. Mediates ubiquitination of PEX5 and auto-ubiquitination of STUB1, TRAF6 and TRIM63/MURF1. Ubiquitinates STUB1-associated HSP90AB1 in vitro. Lacks inherent specificity for any particular lysine residue of ubiquitin. Essential for viral activation of IRF3. Mediates polyubiquitination of CYP3A4. This is Ubiquitin-conjugating enzyme E2 D1 (UBE2D1) from Bos taurus (Bovine).